The chain runs to 264 residues: PDZ domain-containing protein 9 (264 aa).

Positions 22–109 constitute a PDZ domain; that stretch reads VHNLSKTQQT…GTVLQIKVYR (88 aa).

The sequence is that of PDZ domain-containing protein 9 (PDZD9) from Macaca fascicularis (Crab-eating macaque).